The chain runs to 471 residues: Anthocyanidin 3-O-glucosyltransferase (471 aa).

Residue H24 is the Proton acceptor of the active site. An anthocyanidin is bound at residue H24. The active-site Charge relay is D130. T152 provides a ligand contact to UDP-alpha-D-glucose. H161 contributes to the an anthocyanidin binding site. UDP-alpha-D-glucose is bound by residues A352, Q354, H369, W372, S374, and E377. G392 contributes to the an anthocyanidin binding site. The UDP-alpha-D-glucose site is built by D393 and Q394.

It belongs to the UDP-glycosyltransferase family.

It carries out the reaction an anthocyanidin + UDP-alpha-D-glucose + H(+) = an anthocyanidin 3-O-beta-D-glucoside + UDP. It functions in the pathway pigment biosynthesis; anthocyanin biosynthesis. Its function is as follows. In the presence of other necessary color factors, this glycosylation reaction allows the accumulation of anthocyanin pigments. The chain is Anthocyanidin 3-O-glucosyltransferase (BZ1) from Zea mays (Maize).